The chain runs to 140 residues: Small ribosomal subunit protein uS11c (140 aa).

Belongs to the universal ribosomal protein uS11 family. As to quaternary structure, part of the 30S ribosomal subunit.

It localises to the plastid. The protein resides in the chloroplast. In Pelargonium hortorum (Common geranium), this protein is Small ribosomal subunit protein uS11c.